We begin with the raw amino-acid sequence, 187 residues long: Putative glutathione-dependent formaldehyde-activating enzyme (187 aa).

The CENP-V/GFA domain occupies 20 to 166 (FPGGKLYCHC…FESVGLKTYD (147 aa)). 7 residues coordinate Zn(2+): Cys-27, Cys-29, Cys-48, Cys-50, Cys-53, Cys-95, and Cys-98.

This sequence belongs to the Gfa family. Requires Zn(2+) as cofactor.

It carries out the reaction S-(hydroxymethyl)glutathione = glutathione + formaldehyde. Its pathway is one-carbon metabolism; formaldehyde degradation; formate from formaldehyde (glutathione route): step 1/3. Its function is as follows. Catalyzes the condensation of formaldehyde and glutathione to S-hydroxymethylglutathione. The protein is Putative glutathione-dependent formaldehyde-activating enzyme of Talaromyces marneffei (strain ATCC 18224 / CBS 334.59 / QM 7333) (Penicillium marneffei).